Reading from the N-terminus, the 239-residue chain is DNA repair protein RecO (239 aa).

This sequence belongs to the RecO family.

Involved in DNA repair and RecF pathway recombination. In Tolumonas auensis (strain DSM 9187 / NBRC 110442 / TA 4), this protein is DNA repair protein RecO.